Here is a 204-residue protein sequence, read N- to C-terminus: Somatotropin (204 aa).

An N-terminal signal peptide occupies residues 1-17; sequence MNSVVLQLSVVCLGVSS. Q18 is subject to Pyrrolidone carboxylic acid. A Zn(2+)-binding site is contributed by H36. A disulfide bridge links C69 with C177. E186 is a Zn(2+) binding site. C194 and C202 are oxidised to a cystine.

Belongs to the somatotropin/prolactin family.

The protein resides in the secreted. In terms of biological role, growth hormone plays an important role in growth control and involved in the regulation of several anabolic processes. This is Somatotropin (gh) from Oreochromis mossambicus (Mozambique tilapia).